Reading from the N-terminus, the 150-residue chain is D-aminoacyl-tRNA deacylase (150 aa).

Residues G136–P137 carry the Gly-cisPro motif, important for rejection of L-amino acids motif.

The protein belongs to the DTD family. As to quaternary structure, homodimer.

The protein localises to the cytoplasm. It catalyses the reaction glycyl-tRNA(Ala) + H2O = tRNA(Ala) + glycine + H(+). It carries out the reaction a D-aminoacyl-tRNA + H2O = a tRNA + a D-alpha-amino acid + H(+). Functionally, an aminoacyl-tRNA editing enzyme that deacylates mischarged D-aminoacyl-tRNAs. Also deacylates mischarged glycyl-tRNA(Ala), protecting cells against glycine mischarging by AlaRS. Acts via tRNA-based rather than protein-based catalysis; rejects L-amino acids rather than detecting D-amino acids in the active site. By recycling D-aminoacyl-tRNA to D-amino acids and free tRNA molecules, this enzyme counteracts the toxicity associated with the formation of D-aminoacyl-tRNA entities in vivo and helps enforce protein L-homochirality. This Staphylococcus aureus (strain bovine RF122 / ET3-1) protein is D-aminoacyl-tRNA deacylase.